A 364-amino-acid chain; its full sequence is Tyrosine-protein phosphatase YVH1 (364 aa).

The 163-residue stretch at 11–173 (EVTRILGGIY…LHLFEKMGGD (163 aa)) folds into the Tyrosine-protein phosphatase domain. Catalysis depends on Cys117, which acts as the Phosphocysteine intermediate. Ser196 is subject to Phosphoserine.

This sequence belongs to the protein-tyrosine phosphatase family. Non-receptor class dual specificity subfamily.

The enzyme catalyses O-phospho-L-tyrosyl-[protein] + H2O = L-tyrosyl-[protein] + phosphate. May be directly involved in signal transduction and/or cell cycle regulation. It is necessary for maintaining growth rate or spore germination. Could show both activity toward tyrosine-protein phosphate as well as with serine-protein phosphate. In Saccharomyces cerevisiae (strain ATCC 204508 / S288c) (Baker's yeast), this protein is Tyrosine-protein phosphatase YVH1 (YVH1).